The primary structure comprises 135 residues: Large ribosomal subunit protein uL16c (135 aa).

The protein belongs to the universal ribosomal protein uL16 family. In terms of assembly, part of the 50S ribosomal subunit.

Its subcellular location is the plastid. The protein resides in the chloroplast. The polypeptide is Large ribosomal subunit protein uL16c (Populus alba (White poplar)).